We begin with the raw amino-acid sequence, 594 residues long: UvrABC system protein C (594 aa).

Positions 13 to 99 (NGSGVYQYFD…IKQLKPKYNI (87 aa)) constitute a GIY-YIG domain. The 36-residue stretch at 205–240 (DKLIKELQLKMDRLSSNLRFEEALIYRDRISKIQKI) folds into the UVR domain.

The protein belongs to the UvrC family. Interacts with UvrB in an incision complex.

Its subcellular location is the cytoplasm. The UvrABC repair system catalyzes the recognition and processing of DNA lesions. UvrC both incises the 5' and 3' sides of the lesion. The N-terminal half is responsible for the 3' incision and the C-terminal half is responsible for the 5' incision. This Helicobacter acinonychis (strain Sheeba) protein is UvrABC system protein C.